The primary structure comprises 61 residues: Large ribosomal subunit protein bL32 (61 aa).

This sequence belongs to the bacterial ribosomal protein bL32 family.

The sequence is that of Large ribosomal subunit protein bL32 from Cytophaga hutchinsonii (strain ATCC 33406 / DSM 1761 / CIP 103989 / NBRC 15051 / NCIMB 9469 / D465).